The primary structure comprises 41 residues: Large ribosomal subunit protein bL36 (41 aa).

This sequence belongs to the bacterial ribosomal protein bL36 family.

The sequence is that of Large ribosomal subunit protein bL36 from Brucella abortus (strain S19).